The chain runs to 105 residues: Defensin-like protein (105 aa).

Residues 1–25 form the signal peptide; it reads MARSLCFMAFAILAMMLFVAYEVQA. 4 cysteine pairs are disulfide-bonded: Cys-28/Cys-72, Cys-39/Cys-59, Cys-45/Cys-66, and Cys-49/Cys-68.

This sequence belongs to the DEFL family. Flower. Found in petals, stamen and pistils, but not in sepals. In particular, accumulation in a configuration surrounding the inner reproductive whorls.

It is found in the secreted. It localises to the cell wall. The protein resides in the vacuole. Its function is as follows. Involved in floral organogenesis. May play a protective role in flowers by protecting the reproductive organs from potential pathogen attack. The sequence is that of Defensin-like protein (FST) from Nicotiana tabacum (Common tobacco).